We begin with the raw amino-acid sequence, 274 residues long: Large ribosomal subunit protein uL2 (274 aa).

Residues 221 to 274 are disordered; sequence RGTAMNPVDHPHGGGEGRNFGKHPVTPWGVQTKGKKTRNNKRTDKSIVRRRSKK.

It belongs to the universal ribosomal protein uL2 family. Part of the 50S ribosomal subunit. Forms a bridge to the 30S subunit in the 70S ribosome.

Functionally, one of the primary rRNA binding proteins. Required for association of the 30S and 50S subunits to form the 70S ribosome, for tRNA binding and peptide bond formation. It has been suggested to have peptidyltransferase activity; this is somewhat controversial. Makes several contacts with the 16S rRNA in the 70S ribosome. This Hamiltonella defensa subsp. Acyrthosiphon pisum (strain 5AT) protein is Large ribosomal subunit protein uL2.